The following is a 240-amino-acid chain: Uridylate kinase (240 aa).

13 to 16 contacts ATP; the sequence is KLSG. Positions 21–26 are involved in allosteric activation by GTP; the sequence is GEKGFG. Gly-55 provides a ligand contact to UMP. Gly-56 and Arg-60 together coordinate ATP. Residues Asp-75 and 136-143 each bind UMP; that span reads IGNPYFST. Residues Asn-164, Tyr-170, and Asp-173 each contribute to the ATP site.

This sequence belongs to the UMP kinase family. As to quaternary structure, homohexamer.

Its subcellular location is the cytoplasm. It carries out the reaction UMP + ATP = UDP + ADP. It participates in pyrimidine metabolism; CTP biosynthesis via de novo pathway; UDP from UMP (UMPK route): step 1/1. With respect to regulation, allosterically activated by GTP. Inhibited by UTP. Catalyzes the reversible phosphorylation of UMP to UDP. This is Uridylate kinase from Staphylococcus aureus (strain USA300).